We begin with the raw amino-acid sequence, 316 residues long: MLPRLGGTALSLLPLLLLLLGTGGRGARAEVLFRCPPCTPESLAACRPPPAAPPSAGAGPAGDSRAPCELVREPGCGCCSVCARLEGERCGVYTPRCAQGLRCYPHPGSELPLQALVLGEGTCEKRRDAEYGASPEQVADNGDDAEGGLVENHVDGNVNLLGGTGGAGRKPLKSGMKELAVFREKVTEQHRQMGKGGKHHLGLEEPKKLRPPPARTPCQQELDQVLERISTMRLPDERGPLEHLYSLHIPNCDKHGLYNLKQCKMSLNGQRGECWCVNPNTGKLIQGAPTIRGDPECHLFYNEQQGARGAHTQRMQ.

The signal sequence occupies residues 1–29 (MLPRLGGTALSLLPLLLLLLGTGGRGARA). Positions 31-126 (VLFRCPPCTP…VLGEGTCEKR (96 aa)) constitute an IGFBP N-terminal domain. 6 disulfides stabilise this stretch: cysteine 35/cysteine 76, cysteine 38/cysteine 78, cysteine 46/cysteine 79, cysteine 68/cysteine 82, cysteine 90/cysteine 103, and cysteine 97/cysteine 123. Residues 189-217 (QHRQMGKGGKHHLGLEEPKKLRPPPARTP) are disordered. Residues 215 to 297 (RTPCQQELDQ…APTIRGDPEC (83 aa)) form the Thyroglobulin type-1 domain. 3 disulfide bridges follow: cysteine 218/cysteine 252, cysteine 263/cysteine 274, and cysteine 276/cysteine 297. A Cell attachment site motif is present at residues 292 to 294 (RGD).

Interacts with IGF1. Interacts with IGF2. Interacts (via RGD motif) with integrin alpha5/ITGA5; this interaction induces cell migration, adhesion or apoptosis according to the context. Interacts with PTPRB; this interaction leads to PTPRB dimerization and inactivation. In terms of processing, cleaved by MMP9 leading to release of free IGF2 from IGFBP2-IGF2 complex, which contributes to enhance the motility and the growth of astrocytes. Post-translationally, O-glycosylated.

Its subcellular location is the secreted. In terms of biological role, may have both growth-inhibiting and growth-promoting effects, depending on tissue type; increases IGF-induced DNA synthesis in the uterine epithelium. IGF-binding proteins prolong the half-life of the IGFs and have been shown to either inhibit or stimulate the growth promoting effects of the IGFs on cell culture. They alter the interaction of IGFs with their cell surface receptors. Its function is as follows. Multifunctional protein that plays a critical role in regulating the availability of IGFs such as IGF1 and IGF2 to their receptors and thereby regulates IGF-mediated cellular processes including proliferation, differentiation, and apoptosis in a cell-type specific manner. Functions coordinately with receptor protein tyrosine phosphatase beta/PTPRB and the IGF1 receptor to regulate IGF1-mediated signaling by stimulating the phosphorylation of PTEN leading to its inactivation and AKT1 activation. Plays a positive role in cell migration via interaction with integrin alpha5/ITGA5 through an RGD motif. Additionally, interaction with ITGA5/ITGB1 enhances the adhesion of endothelial progenitor cells to endothelial cells. Upon mitochondrial damage, facilitates apoptosis with ITGA5 of podocytes, and then activates the phosphorylation of focal adhesion kinase (FAK)-mediated mitochondrial injury. The protein is Insulin-like growth factor-binding protein 2 (IGFBP2) of Sus scrofa (Pig).